Consider the following 348-residue polypeptide: Fructose-1,6-bisphosphatase class 1 (348 aa).

Residues E92, D111, L113, and D114 each contribute to the Mg(2+) site. Substrate contacts are provided by residues 114-117 and N204; that span reads DGSS. E276 provides a ligand contact to Mg(2+).

This sequence belongs to the FBPase class 1 family. Homotetramer. Mg(2+) is required as a cofactor.

The protein localises to the cytoplasm. It carries out the reaction beta-D-fructose 1,6-bisphosphate + H2O = beta-D-fructose 6-phosphate + phosphate. It participates in carbohydrate biosynthesis; gluconeogenesis. The protein is Fructose-1,6-bisphosphatase class 1 of Methylorubrum extorquens (strain PA1) (Methylobacterium extorquens).